The chain runs to 449 residues: COP9 signalosome complex subunit 2 (449 aa).

The segment at 1-32 (MSDDEDMMYDDDEYFDDDEDQDQNDSESEGVE) is disordered. The region spanning 251 to 420 (AEKEWEKAHT…QQLELDTAKS (170 aa)) is the PCI domain.

The protein belongs to the CSN2 family. In terms of assembly, component of the CSN complex. The holocomplex is comprised of 8 subunits csn1-8. In the complex, it probably interacts directly with csn1, csn3, csn5, csn6, csn7 and csn8.

It is found in the cytoplasm. The protein localises to the nucleus. In terms of biological role, essential component of the COP9 signalosome complex (CSN), a complex involved in various cellular and developmental processes. The CSN complex is an essential regulator of the ubiquitin (Ubl) conjugation pathway by mediating the deneddylation of the cullin subunits of E3 ligase complexes, leading to modify the Ubl ligase activity. The protein is COP9 signalosome complex subunit 2 (csn2) of Dictyostelium discoideum (Social amoeba).